The following is a 139-amino-acid chain: 3-hydroxyacyl-[acyl-carrier-protein] dehydratase FabZ (139 aa).

Residue His47 is part of the active site.

This sequence belongs to the thioester dehydratase family. FabZ subfamily.

The protein localises to the cytoplasm. It carries out the reaction a (3R)-hydroxyacyl-[ACP] = a (2E)-enoyl-[ACP] + H2O. In terms of biological role, involved in unsaturated fatty acids biosynthesis. Catalyzes the dehydration of short chain beta-hydroxyacyl-ACPs and long chain saturated and unsaturated beta-hydroxyacyl-ACPs. This is 3-hydroxyacyl-[acyl-carrier-protein] dehydratase FabZ from Clostridium perfringens (strain ATCC 13124 / DSM 756 / JCM 1290 / NCIMB 6125 / NCTC 8237 / Type A).